We begin with the raw amino-acid sequence, 155 residues long: Arginine repressor (155 aa).

The protein belongs to the ArgR family.

Its subcellular location is the cytoplasm. The protein operates within amino-acid biosynthesis; L-arginine biosynthesis [regulation]. In terms of biological role, regulates arginine biosynthesis genes. This Histophilus somni (strain 2336) (Haemophilus somnus) protein is Arginine repressor.